Here is a 94-residue protein sequence, read N- to C-terminus: Sec-independent protein translocase protein TatA (94 aa).

Residues 1-21 (MFGRLGAPEIILILVVIILLF) form a helical membrane-spanning segment. Residues 44–94 (AKAMKSEGQESTPAGPPNTDEQPPAQRTIQAAPGDVTSSRPVSEPTDTTKR) are disordered. The span at 62 to 72 (TDEQPPAQRTI) shows a compositional bias: polar residues.

This sequence belongs to the TatA/E family. In terms of assembly, the Tat system comprises two distinct complexes: a TatABC complex, containing multiple copies of TatA, TatB and TatC subunits, and a separate TatA complex, containing only TatA subunits. Substrates initially bind to the TatABC complex, which probably triggers association of the separate TatA complex to form the active translocon.

It is found in the cell membrane. Functionally, part of the twin-arginine translocation (Tat) system that transports large folded proteins containing a characteristic twin-arginine motif in their signal peptide across membranes. TatA could form the protein-conducting channel of the Tat system. The protein is Sec-independent protein translocase protein TatA of Streptomyces avermitilis (strain ATCC 31267 / DSM 46492 / JCM 5070 / NBRC 14893 / NCIMB 12804 / NRRL 8165 / MA-4680).